A 274-amino-acid polypeptide reads, in one-letter code: Large ribosomal subunit protein uL2cz/uL2cy (274 aa).

2 disordered regions span residues methionine 1 to valine 22 and proline 225 to lysine 274.

The protein belongs to the universal ribosomal protein uL2 family. As to quaternary structure, part of the 50S ribosomal subunit.

It is found in the plastid. The protein resides in the chloroplast. In Arabis hirsuta (Hairy rock-cress), this protein is Large ribosomal subunit protein uL2cz/uL2cy (rpl2-A).